A 310-amino-acid polypeptide reads, in one-letter code: Vomeronasal type-1 receptor 90 (310 aa).

Residues 1–20 (MRRISTLYGVVDKQAIFFSE) are Extracellular-facing. The helical transmembrane segment at 21–41 (VVIGISFNSILFLFHIFQFLL) threads the bilayer. Residues 42-46 (ERRLR) are Cytoplasmic-facing. The chain crosses the membrane as a helical span at residues 47-67 (ITDLIISLLALIHLGMLTVMG). Residues 68–93 (FRAVDIFASQNVWNDIKCKSLAHLHR) are Extracellular-facing. A disulfide bridge links cysteine 85 with cysteine 172. Residues 94 to 114 (LLRGLSLCATCLLSIFQAITL) form a helical membrane-spanning segment. Residues 115 to 135 (SPRSSCLAKFKYKSTQHSLCS) are Cytoplasmic-facing. A helical membrane pass occupies residues 136–156 (LLVLWAFYMSCGTHYSFTIVA). Residues 157 to 183 (DYNFSSRSLIFVTESCIILPMDYITRH) lie on the Extracellular side of the membrane. A glycan (N-linked (GlcNAc...) asparagine) is linked at asparagine 159. A helical membrane pass occupies residues 184–204 (LFFILGIFRDVSFIGLMALSS). The Cytoplasmic portion of the chain corresponds to 205 to 238 (GYMVALLCRHRKQAQHLHRTSLSPKASPEQRATR). A helical transmembrane segment spans residues 239 to 259 (TILLLMSFFVLMYCLDCTISA). The Extracellular portion of the chain corresponds to 260-271 (SRLMHNGEPIHH). Residues 272–292 (SIQMMVSNSYATLSPLLLIVT) form a helical membrane-spanning segment. Over 293-310 (ENRISRFLKSLLGRTVDA) the chain is Cytoplasmic.

It belongs to the G-protein coupled receptor 1 family. In terms of tissue distribution, expressed in 1-4% of neurons of the vomeronasal organ. Only one pheromone receptor gene may be expressed in a particular neuron. Not expressed in the main olfactory epithelium.

It localises to the cell membrane. Putative pheromone receptor implicated in the regulation of social as well as reproductive behavior. In Rattus norvegicus (Rat), this protein is Vomeronasal type-1 receptor 90 (Vom1r90).